We begin with the raw amino-acid sequence, 787 residues long: Protein translocase subunit SecA (787 aa).

Residues Gln85, 103–107 (GEGKT), and Asp492 contribute to the ATP site.

This sequence belongs to the SecA family. In terms of assembly, monomer and homodimer. Part of the essential Sec protein translocation apparatus which comprises SecA, SecYEG and auxiliary proteins SecDF. Other proteins may also be involved.

The protein resides in the cell membrane. Its subcellular location is the cytoplasm. It carries out the reaction ATP + H2O + cellular proteinSide 1 = ADP + phosphate + cellular proteinSide 2.. Its function is as follows. Part of the Sec protein translocase complex. Interacts with the SecYEG preprotein conducting channel. Has a central role in coupling the hydrolysis of ATP to the transfer of proteins into and across the cell membrane, serving as an ATP-driven molecular motor driving the stepwise translocation of polypeptide chains across the membrane. This is Protein translocase subunit SecA from Limosilactobacillus reuteri (strain DSM 20016) (Lactobacillus reuteri).